The following is a 575-amino-acid chain: Hemagglutinin-neuraminidase (575 aa).

Positions 1–10 (MDGDRSKRDS) are enriched in basic and acidic residues. Residues 1–25 (MDGDRSKRDSYWSTSPGGSTTKLVS) form a disordered region. The Intravirion segment spans residues 1–37 (MDGDRSKRDSYWSTSPGGSTTKLVSDSERSGKVDTWL). An incorporation in virion region spans residues 10 to 14 (SYWST). The span at 11-24 (YWSTSPGGSTTKLV) shows a compositional bias: polar residues. Residues 38 to 58 (LILAFTQWALSIATVIICIVI) traverse the membrane as a helical segment. Residues 59–140 (AARQGYSMER…RQELTQLCDS (82 aa)) form an involved in interaction with F protein region. Topologically, residues 59–575 (AARQGYSMER…SIPKLCKAES (517 aa)) are virion surface. The N-linked (GlcNAc...) asparagine; by host glycan is linked to Asn77. Cystine bridges form between Cys192-Cys216, Cys258-Cys271, Cys357-Cys469, and Cys463-Cys473. The tract at residues 254-259 (NRKSCS) is involved in neuraminidase activity. 2 N-linked (GlcNAc...) asparagine; by host glycosylation sites follow: Asn499 and Asn511. Cysteines 535 and 544 form a disulfide.

It belongs to the paramyxoviruses hemagglutinin-neuraminidase family. In terms of assembly, homotetramer; composed of disulfide-linked homodimers. Interacts with F protein trimer. Post-translationally, N-glycosylated; glycans consist of a mixture of high mannose-type oligosaccharides and of complex-type oligosaccharides.

The protein localises to the virion membrane. It is found in the host cell membrane. The enzyme catalyses Hydrolysis of alpha-(2-&gt;3)-, alpha-(2-&gt;6)-, alpha-(2-&gt;8)- glycosidic linkages of terminal sialic acid residues in oligosaccharides, glycoproteins, glycolipids, colominic acid and synthetic substrates.. Functionally, attaches the virus to sialic acid-containing cell receptors and thereby initiating infection. Binding of HN protein to the receptor induces a conformational change that allows the F protein to trigger virion/cell membranes fusion. In terms of biological role, neuraminidase activity ensures the efficient spread of the virus by dissociating the mature virions from the neuraminic acid containing glycoproteins. The chain is Hemagglutinin-neuraminidase (HN) from Cavia cutleri (Guinea pig).